A 138-amino-acid chain; its full sequence is Large ribosomal subunit protein uL16 (138 aa).

Over residues methionine 1–glutamine 13 the composition is skewed to basic residues. The disordered stretch occupies residues methionine 1–isoleucine 20.

This sequence belongs to the universal ribosomal protein uL16 family. In terms of assembly, part of the 50S ribosomal subunit.

Its function is as follows. Binds 23S rRNA and is also seen to make contacts with the A and possibly P site tRNAs. The polypeptide is Large ribosomal subunit protein uL16 (Burkholderia mallei (strain NCTC 10247)).